Here is a 309-residue protein sequence, read N- to C-terminus: Porphobilinogen deaminase (309 aa).

C244 is subject to S-(dipyrrolylmethanemethyl)cysteine.

The protein belongs to the HMBS family. As to quaternary structure, monomer. Dipyrromethane is required as a cofactor.

It catalyses the reaction 4 porphobilinogen + H2O = hydroxymethylbilane + 4 NH4(+). Its pathway is porphyrin-containing compound metabolism; protoporphyrin-IX biosynthesis; coproporphyrinogen-III from 5-aminolevulinate: step 2/4. Tetrapolymerization of the monopyrrole PBG into the hydroxymethylbilane pre-uroporphyrinogen in several discrete steps. The chain is Porphobilinogen deaminase from Agrobacterium fabrum (strain C58 / ATCC 33970) (Agrobacterium tumefaciens (strain C58)).